We begin with the raw amino-acid sequence, 418 residues long: Tyrosine--tRNA ligase (418 aa).

Y34 is a binding site for L-tyrosine. The 'HIGH' region signature appears at P39 to H48. L-tyrosine is bound by residues Y166 and Q170. The 'KMSKS' region motif lies at K228–T232. ATP is bound at residue K231. Residues Q350–K418 enclose the S4 RNA-binding domain.

This sequence belongs to the class-I aminoacyl-tRNA synthetase family. TyrS type 1 subfamily. In terms of assembly, homodimer.

It is found in the cytoplasm. It carries out the reaction tRNA(Tyr) + L-tyrosine + ATP = L-tyrosyl-tRNA(Tyr) + AMP + diphosphate + H(+). Catalyzes the attachment of tyrosine to tRNA(Tyr) in a two-step reaction: tyrosine is first activated by ATP to form Tyr-AMP and then transferred to the acceptor end of tRNA(Tyr). The protein is Tyrosine--tRNA ligase of Lactiplantibacillus plantarum (strain ATCC BAA-793 / NCIMB 8826 / WCFS1) (Lactobacillus plantarum).